A 295-amino-acid polypeptide reads, in one-letter code: Transmembrane protein 71 (295 aa).

2 helical membrane-spanning segments follow: residues 229-249 (LLQE…ISAC) and 253-273 (FMGE…VAYV).

It belongs to the TMEM71 family.

Its subcellular location is the membrane. The chain is Transmembrane protein 71 (TMEM71) from Homo sapiens (Human).